We begin with the raw amino-acid sequence, 161 residues long: SsrA-binding protein (161 aa).

This sequence belongs to the SmpB family.

The protein resides in the cytoplasm. In terms of biological role, required for rescue of stalled ribosomes mediated by trans-translation. Binds to transfer-messenger RNA (tmRNA), required for stable association of tmRNA with ribosomes. tmRNA and SmpB together mimic tRNA shape, replacing the anticodon stem-loop with SmpB. tmRNA is encoded by the ssrA gene; the 2 termini fold to resemble tRNA(Ala) and it encodes a 'tag peptide', a short internal open reading frame. During trans-translation Ala-aminoacylated tmRNA acts like a tRNA, entering the A-site of stalled ribosomes, displacing the stalled mRNA. The ribosome then switches to translate the ORF on the tmRNA; the nascent peptide is terminated with the 'tag peptide' encoded by the tmRNA and targeted for degradation. The ribosome is freed to recommence translation, which seems to be the essential function of trans-translation. The sequence is that of SsrA-binding protein from Baumannia cicadellinicola subsp. Homalodisca coagulata.